A 151-amino-acid polypeptide reads, in one-letter code: Large ribosomal subunit protein bL9 (151 aa).

The protein belongs to the bacterial ribosomal protein bL9 family.

In terms of biological role, binds to the 23S rRNA. This chain is Large ribosomal subunit protein bL9, found in Nitrosomonas europaea (strain ATCC 19718 / CIP 103999 / KCTC 2705 / NBRC 14298).